The chain runs to 487 residues: MKAQPKASHFIGGAFVEDKAGKPLPVIYPATGEEIASLYSATPGIIEAAYAAALKAQGEWAALKPVERGRILRRTAEILREKNRKLSKLETLDTGKALQETLVADAASAADALEFFGGIISGFNGEFVELGGSFAYTRREALGICVGIGAWNYPIQIAAWKSAPALAMGNAFIFKPSENTPLSALALAEAYKEAGLPDGLFNVVQGYGDVGAALVNHRLTAKVSLTGSVPTGRRIMAQAGEQLKHVTMELGGKSPLIVFDDADLESAIGGAMLGNFYSTGQVCSNGTRVFVHKNIRERFIERLVERTRKIRIGDPFDEATQMGPLISAAQRDKVLSYIKKGKAEGATLACGGGVPKLQGFDKGFFIEPTVFADVTDTMTIAREEIFGPVMSVLEFSDEDEVIARANDSEFGLAAGVFTADLSRGHHVIGQIKAGTCWINAYNLTPVEVPFGGYKQSGIGRENGIAALAHYSQIKTVYVEMGKVDSPY.

K(+)-binding residues include Ile27 and Asp93. 149–151 contacts NAD(+); it reads GAW. The active-site Charge relay system is Lys161. NAD(+)-binding positions include 175-178 and 228-231; these read KPSE and SVPT. Residue Leu243 coordinates K(+). The Proton acceptor role is filled by Glu249. The NAD(+) site is built by Gly251, Cys283, and Glu384. Cys283 (nucleophile) is an active-site residue. Cysteine sulfenic acid (-SOH) is present on Cys283. K(+)-binding residues include Lys454 and Gly457. The Charge relay system role is filled by Glu461.

This sequence belongs to the aldehyde dehydrogenase family. In terms of assembly, dimer of dimers. It depends on K(+) as a cofactor.

The catalysed reaction is betaine aldehyde + NAD(+) + H2O = glycine betaine + NADH + 2 H(+). Its pathway is amine and polyamine biosynthesis; betaine biosynthesis via choline pathway; betaine from betaine aldehyde: step 1/1. Functionally, involved in the biosynthesis of the osmoprotectant glycine betaine. Catalyzes the irreversible oxidation of betaine aldehyde to the corresponding acid. This chain is Betaine aldehyde dehydrogenase, found in Brucella abortus (strain S19).